Consider the following 217-residue polypeptide: Trimethylamine corrinoid protein 2 (217 aa).

Positions 1–92 (MAGKEEIIAK…EMEKRKAKTT (92 aa)) constitute a B12-binding N-terminal domain. Residues 94-217 (LGTVIIGTIE…VNKIKAAIKS (124 aa)) form the B12-binding domain. A methylcob(III)alamin-binding site is contributed by His-107.

This sequence belongs to the methylamine corrinoid protein family. In terms of assembly, can form a complex with MttB.

The protein operates within one-carbon metabolism; methanogenesis from trimethylamine. Functionally, acts probably as a methyl group carrier between MttB and either MtbA or MtaA. The protein is Trimethylamine corrinoid protein 2 (mttC2) of Methanosarcina acetivorans (strain ATCC 35395 / DSM 2834 / JCM 12185 / C2A).